A 232-amino-acid polypeptide reads, in one-letter code: Methylthioribulose-1-phosphate dehydratase (232 aa).

Cys91 provides a ligand contact to substrate. Zn(2+)-binding residues include His109, His111, and His191.

The protein belongs to the aldolase class II family. MtnB subfamily. Requires Zn(2+) as cofactor.

The protein resides in the cytoplasm. The catalysed reaction is 5-(methylsulfanyl)-D-ribulose 1-phosphate = 5-methylsulfanyl-2,3-dioxopentyl phosphate + H2O. The protein operates within amino-acid biosynthesis; L-methionine biosynthesis via salvage pathway; L-methionine from S-methyl-5-thio-alpha-D-ribose 1-phosphate: step 2/6. Its function is as follows. Catalyzes the dehydration of methylthioribulose-1-phosphate (MTRu-1-P) into 2,3-diketo-5-methylthiopentyl-1-phosphate (DK-MTP-1-P). This chain is Methylthioribulose-1-phosphate dehydratase, found in Schizosaccharomyces japonicus (strain yFS275 / FY16936) (Fission yeast).